The sequence spans 363 residues: Cytoplasmic tRNA 2-thiolation protein 1 (363 aa).

The disordered stretch occupies residues 340 to 363 (ASLNGTPRTPPTPAEPVEGIERAA).

Belongs to the TtcA family. CTU1/NCS6/ATPBD3 subfamily.

Its subcellular location is the cytoplasm. It participates in tRNA modification; 5-methoxycarbonylmethyl-2-thiouridine-tRNA biosynthesis. Its function is as follows. Plays a central role in 2-thiolation of mcm(5)S(2)U at tRNA wobble positions of tRNA(Lys), tRNA(Glu) and tRNA(Gln). Directly binds tRNAs and probably acts by catalyzing adenylation of tRNAs, an intermediate required for 2-thiolation. It is unclear whether it acts as a sulfurtransferase that transfers sulfur from thiocarboxylated URM1 onto the uridine of tRNAs at wobble position. Prior mcm(5) tRNA modification by the elongator complex is required for 2-thiolation. May also be involved in protein urmylation. The protein is Cytoplasmic tRNA 2-thiolation protein 1 of Cryptococcus neoformans var. neoformans serotype D (strain B-3501A) (Filobasidiella neoformans).